A 133-amino-acid polypeptide reads, in one-letter code: Small ribosomal subunit protein uS11 (133 aa).

This sequence belongs to the universal ribosomal protein uS11 family. As to quaternary structure, part of the 30S ribosomal subunit. Interacts with proteins S7 and S18. Binds to IF-3.

Located on the platform of the 30S subunit, it bridges several disparate RNA helices of the 16S rRNA. Forms part of the Shine-Dalgarno cleft in the 70S ribosome. In Bordetella petrii (strain ATCC BAA-461 / DSM 12804 / CCUG 43448), this protein is Small ribosomal subunit protein uS11.